A 159-amino-acid chain; its full sequence is Cyclic pyranopterin monophosphate synthase (159 aa).

Residues 75-77 and 113-114 contribute to the substrate site; these read LCH and ME. The active site involves aspartate 128.

Belongs to the MoaC family. Homohexamer; trimer of dimers.

The enzyme catalyses (8S)-3',8-cyclo-7,8-dihydroguanosine 5'-triphosphate = cyclic pyranopterin phosphate + diphosphate. Its pathway is cofactor biosynthesis; molybdopterin biosynthesis. In terms of biological role, catalyzes the conversion of (8S)-3',8-cyclo-7,8-dihydroguanosine 5'-triphosphate to cyclic pyranopterin monophosphate (cPMP). This is Cyclic pyranopterin monophosphate synthase from Vibrio vulnificus (strain YJ016).